The sequence spans 793 residues: Kinesin-associated protein 3 (793 aa).

S60 carries the phosphoserine modification. The span at 103–119 (LPGKEKKEKSSKPKDPP) shows a compositional bias: basic and acidic residues. Residues 103–123 (LPGKEKKEKSSKPKDPPPFEG) form a disordered region. ARM repeat units follow at residues 333 to 373 (FMEN…NLSF), 374 to 412 (DTGL…HISM), 494 to 533 (DGPT…NLTI), 578 to 620 (DDSC…QMVF), and 621 to 662 (HQAT…IIAE).

In terms of assembly, interacts with SMC3 subunit of the cohesin complex. Heterotrimer of KIFAP3, KIF3A and KIF3B. Interacts with RAP1GDS1/SMG GDS. In terms of processing, phosphorylated on tyrosine residues by SRC in vitro; this reduces the binding affinity of the protein for RAP1GDS1.

Involved in tethering the chromosomes to the spindle pole and in chromosome movement. Binds to the tail domain of the KIF3A/KIF3B heterodimer to form a heterotrimeric KIF3 complex and may regulate the membrane binding of this complex. This is Kinesin-associated protein 3 (Kifap3) from Mus musculus (Mouse).